The primary structure comprises 295 residues: Acetylglutamate kinase (295 aa).

Residues 70–71 (GG), Arg92, and Asn191 each bind substrate.

It belongs to the acetylglutamate kinase family. ArgB subfamily.

The protein localises to the cytoplasm. It carries out the reaction N-acetyl-L-glutamate + ATP = N-acetyl-L-glutamyl 5-phosphate + ADP. It functions in the pathway amino-acid biosynthesis; L-arginine biosynthesis; N(2)-acetyl-L-ornithine from L-glutamate: step 2/4. Functionally, catalyzes the ATP-dependent phosphorylation of N-acetyl-L-glutamate. The protein is Acetylglutamate kinase of Mycolicibacterium paratuberculosis (strain ATCC BAA-968 / K-10) (Mycobacterium paratuberculosis).